An 88-amino-acid chain; its full sequence is Phosphoribosyl-ATP pyrophosphatase (88 aa).

It belongs to the PRA-PH family.

The protein resides in the cytoplasm. The catalysed reaction is 1-(5-phospho-beta-D-ribosyl)-ATP + H2O = 1-(5-phospho-beta-D-ribosyl)-5'-AMP + diphosphate + H(+). It participates in amino-acid biosynthesis; L-histidine biosynthesis; L-histidine from 5-phospho-alpha-D-ribose 1-diphosphate: step 2/9. This Cutibacterium acnes (strain DSM 16379 / KPA171202) (Propionibacterium acnes) protein is Phosphoribosyl-ATP pyrophosphatase.